The following is a 139-amino-acid chain: Large ribosomal subunit protein uL16 (139 aa).

Over residues 1–19 (MLIPRRVKHRKQHHPKRSG) the composition is skewed to basic residues. Positions 1 to 25 (MLIPRRVKHRKQHHPKRSGMSKGGT) are disordered.

The protein belongs to the universal ribosomal protein uL16 family. In terms of assembly, part of the 50S ribosomal subunit.

Binds 23S rRNA and is also seen to make contacts with the A and possibly P site tRNAs. The chain is Large ribosomal subunit protein uL16 from Streptomyces griseus subsp. griseus (strain JCM 4626 / CBS 651.72 / NBRC 13350 / KCC S-0626 / ISP 5235).